The following is a 228-amino-acid chain: 6-carboxyhexanoate--CoA ligase (228 aa).

Belongs to the BioW family. In terms of assembly, homodimer. Requires Mg(2+) as cofactor.

It carries out the reaction heptanedioate + ATP + CoA = 6-carboxyhexanoyl-CoA + AMP + diphosphate. The protein operates within metabolic intermediate metabolism; pimeloyl-CoA biosynthesis; pimeloyl-CoA from pimelate: step 1/1. In terms of biological role, catalyzes the transformation of pimelate into pimeloyl-CoA with concomitant hydrolysis of ATP to AMP. The protein is 6-carboxyhexanoate--CoA ligase of Staphylococcus epidermidis (strain ATCC 35984 / DSM 28319 / BCRC 17069 / CCUG 31568 / BM 3577 / RP62A).